The chain runs to 745 residues: Elongation factor G, mitochondrial (745 aa).

Residues 1 to 15 constitute a mitochondrion transit peptide; sequence MSLITRLLTASSPLR. Positions 40–317 constitute a tr-type G domain; it reads DKIRNIGISA…AVLEYLPNPG (278 aa). GTP contacts are provided by residues 49–56, 116–120, and 170–173; these read AHIDSGKT, DTPGH, and NKLD.

The protein belongs to the TRAFAC class translation factor GTPase superfamily. Classic translation factor GTPase family. EF-G/EF-2 subfamily.

It localises to the mitochondrion. Its pathway is protein biosynthesis; polypeptide chain elongation. In terms of biological role, mitochondrial GTPase that catalyzes the GTP-dependent ribosomal translocation step during translation elongation. During this step, the ribosome changes from the pre-translocational (PRE) to the post-translocational (POST) state as the newly formed A-site-bound peptidyl-tRNA and P-site-bound deacylated tRNA move to the P and E sites, respectively. Catalyzes the coordinated movement of the two tRNA molecules, the mRNA and conformational changes in the ribosome. Essential during development as it acts as a retrograde signal from mitochondria to the nucleus to slow down cell proliferation if mitochondrial energy output is low. The protein is Elongation factor G, mitochondrial (ico) of Drosophila ananassae (Fruit fly).